The primary structure comprises 906 residues: DNA gyrase subunit A (906 aa).

One can recognise a Topo IIA-type catalytic domain in the interval 35-524; the sequence is IPDVRDGLKP…GEFDQDIEDL (490 aa). The O-(5'-phospho-DNA)-tyrosine intermediate role is filled by Y123. The GyrA-box signature appears at 551-557; it reads QKRGGKG. The segment at 886–906 is disordered; sequence SESEEDSELEEDLEQAEEVYT.

The protein belongs to the type II topoisomerase GyrA/ParC subunit family. In terms of assembly, heterotetramer, composed of two GyrA and two GyrB chains. In the heterotetramer, GyrA contains the active site tyrosine that forms a transient covalent intermediate with DNA, while GyrB binds cofactors and catalyzes ATP hydrolysis.

It localises to the cytoplasm. The enzyme catalyses ATP-dependent breakage, passage and rejoining of double-stranded DNA.. In terms of biological role, a type II topoisomerase that negatively supercoils closed circular double-stranded (ds) DNA in an ATP-dependent manner to modulate DNA topology and maintain chromosomes in an underwound state. Negative supercoiling favors strand separation, and DNA replication, transcription, recombination and repair, all of which involve strand separation. Also able to catalyze the interconversion of other topological isomers of dsDNA rings, including catenanes and knotted rings. Type II topoisomerases break and join 2 DNA strands simultaneously in an ATP-dependent manner. The polypeptide is DNA gyrase subunit A (Rickettsia felis (strain ATCC VR-1525 / URRWXCal2) (Rickettsia azadi)).